The primary structure comprises 97 residues: Co-chaperonin GroES (97 aa).

It belongs to the GroES chaperonin family. In terms of assembly, heptamer of 7 subunits arranged in a ring. Interacts with the chaperonin GroEL.

It localises to the cytoplasm. Together with the chaperonin GroEL, plays an essential role in assisting protein folding. The GroEL-GroES system forms a nano-cage that allows encapsulation of the non-native substrate proteins and provides a physical environment optimized to promote and accelerate protein folding. GroES binds to the apical surface of the GroEL ring, thereby capping the opening of the GroEL channel. This is Co-chaperonin GroES from Elusimicrobium minutum (strain Pei191).